A 500-amino-acid chain; its full sequence is 4-aminobutyrate aminotransferase, mitochondrial (500 aa).

The N-terminal 28 residues, 1-28 (MASMLLAQRLACSFQHSYRLLVPGSRHI), are a transit peptide targeting the mitochondrion. C163 contacts [2Fe-2S] cluster. Residue 164-165 (GS) participates in pyridoxal 5'-phosphate binding. A [2Fe-2S] cluster-binding site is contributed by C166. R220 lines the substrate pocket. K231 carries the post-translational modification N6-succinyllysine. At K252 the chain carries N6-acetyllysine; alternate. K252 bears the N6-succinyllysine; alternate mark. Residues K279 and K318 each carry the N6-acetyllysine modification. K357 carries the N6-(pyridoxal phosphate)lysine modification. T381 serves as a coordination point for pyridoxal 5'-phosphate. K413 is subject to N6-acetyllysine; alternate. An N6-succinyllysine; alternate modification is found at K413. Residues K452 and K470 each carry the N6-acetyllysine modification.

Belongs to the class-III pyridoxal-phosphate-dependent aminotransferase family. In terms of assembly, homodimer; disulfide-linked. Pyridoxal 5'-phosphate serves as cofactor. Requires [2Fe-2S] cluster as cofactor. In terms of tissue distribution, liver &gt; pancreas &gt; brain &gt; kidney &gt; heart &gt; placenta.

The protein localises to the mitochondrion matrix. The catalysed reaction is 4-aminobutanoate + 2-oxoglutarate = succinate semialdehyde + L-glutamate. The enzyme catalyses (S)-3-amino-2-methylpropanoate + 2-oxoglutarate = 2-methyl-3-oxopropanoate + L-glutamate. In terms of biological role, catalyzes the conversion of gamma-aminobutyrate and L-beta-aminoisobutyrate to succinate semialdehyde and methylmalonate semialdehyde, respectively. Can also convert delta-aminovalerate and beta-alanine. This Homo sapiens (Human) protein is 4-aminobutyrate aminotransferase, mitochondrial.